Consider the following 312-residue polypeptide: MELHIWPSDFGLPTIDVSSLQFLACSKMCASPVRVVQSARPWRSPNGELPMVAQIDGNAKPVTDFEKFVDILKKCGQDVVIDADLTTIERAQLDAFSCYLHHNLYPAVLHTFWADDLNYNTVTQYWYASHLHFPYNLYYLEKRKKKALRMLGGKNDTEILKDAFMALNTLSTKLGDNKFFCGNKPTSLDALVFGYLAPLLRVPLPNDRLQVQLSACPNLVRFVETVSSIYLPLSEDELKRQQSNRKMWQSRISKAKADKEAAKTTEEAAEAIPDEPPMRDAILFTIGALVLSVAFAIHTGLIQVSVEEEIAE.

The helical transmembrane segment at 282–302 threads the bilayer; it reads ILFTIGALVLSVAFAIHTGLI.

It belongs to the metaxin family. In terms of assembly, associates with the mitochondrial contact site and cristae organizing system (MICOS) complex (also known as MINOS or MitOS complex).

Its subcellular location is the mitochondrion outer membrane. Functionally, involved in transport of proteins into the mitochondrion. Essential for embryonic development. The polypeptide is Metaxin-1 homolog (Caenorhabditis briggsae).